The chain runs to 132 residues: Small ribosomal subunit protein uS8 (132 aa).

The protein belongs to the universal ribosomal protein uS8 family. In terms of assembly, part of the 30S ribosomal subunit. Contacts proteins S5 and S12.

In terms of biological role, one of the primary rRNA binding proteins, it binds directly to 16S rRNA central domain where it helps coordinate assembly of the platform of the 30S subunit. The chain is Small ribosomal subunit protein uS8 from Corynebacterium kroppenstedtii (strain DSM 44385 / JCM 11950 / CIP 105744 / CCUG 35717).